The chain runs to 627 residues: MAKTEQRFDYVKIGLASPERIMEWGQRTLPNGQVVGEVTKPETINYRTLKPEMDGLFCERIFGPAKDWECHCGKYKRVRHRGIVCERCGVEVTESRVRRHRMGYIKLAAPVTHVWYLKGIPSHIATLLDMPLRDVEQVVYFNAYVVVDPGNAQNLSYKQLLTEDQFLEIEDQMYEEGSELQLPENWAMIGAEAIERLLKDIDLEKEAEQLREEITSARGQKRARLIKRLRVIDNFIATGSRPEWMVLRVLPVIPPDLRPMVQLDGGRFATSDLNDLYRRVINRNNRLARLQEIMAPEIIVRNEKRMLQEAVDALIDNGRRGRVVAGANNRPLKSLSDIIEGKQGRFRQNLLGKRVDYSGRSVIVVGPNLRMHQCGLPKEMAIELFQPFVIHKLIKRGIVNNIKAAKKMIQSNDPQIWDVLEEVIDGHPVLLNRAPTLHRLGIQAFEPILVEGRAIQLHPLVCPAFNADFDGDQMAVHVPLSLEAQAEARLLMLATNNILSPATGAPIITPSQDMVLGCYYLTADNPHAPDIGDRFFASLEDALIAYDRGAIGLHSKVWVRYHGPMELGKGEKESEPQIIEEAGGIRLKITNYRRIREDQNGNVISQYIRTTPGRIIFNKTVQDILSA.

Residues Cys-70, Cys-72, Cys-85, and Cys-88 each coordinate Zn(2+). 3 residues coordinate Mg(2+): Asp-468, Asp-470, and Asp-472.

It belongs to the RNA polymerase beta' chain family. RpoC1 subfamily. In terms of assembly, in cyanobacteria the RNAP catalytic core is composed of 2 alpha, 1 beta, 1 beta', 1 gamma and 1 omega subunit. When a sigma factor is associated with the core the holoenzyme is formed, which can initiate transcription. It depends on Mg(2+) as a cofactor. Zn(2+) is required as a cofactor.

It catalyses the reaction RNA(n) + a ribonucleoside 5'-triphosphate = RNA(n+1) + diphosphate. In terms of biological role, DNA-dependent RNA polymerase catalyzes the transcription of DNA into RNA using the four ribonucleoside triphosphates as substrates. The sequence is that of DNA-directed RNA polymerase subunit gamma from Synechococcus sp. (strain JA-2-3B'a(2-13)) (Cyanobacteria bacterium Yellowstone B-Prime).